A 734-amino-acid chain; its full sequence is Polyribonucleotide nucleotidyltransferase (734 aa).

Positions 505 and 511 each coordinate Mg(2+). Residues proline 572–isoleucine 631 enclose the KH domain. Residues glycine 641–lysine 715 form the S1 motif domain.

Belongs to the polyribonucleotide nucleotidyltransferase family. Requires Mg(2+) as cofactor.

The protein resides in the cytoplasm. The catalysed reaction is RNA(n+1) + phosphate = RNA(n) + a ribonucleoside 5'-diphosphate. Its function is as follows. Involved in mRNA degradation. Catalyzes the phosphorolysis of single-stranded polyribonucleotides processively in the 3'- to 5'-direction. The protein is Polyribonucleotide nucleotidyltransferase of Prosthecochloris aestuarii (strain DSM 271 / SK 413).